The chain runs to 806 residues: GPI ethanolamine phosphate transferase 2 (806 aa).

N-linked (GlcNAc...) asparagine glycans are attached at residues N70, N184, and N242. Transmembrane regions (helical) follow at residues 396–416 (MLFLGVGMLSIVTAATAYCYI), 425–445 (SVLMIAVTALLGSSVFGSSFV), and 451–471 (IWWWIIIAVVGYSWATRPSCT). An N-linked (GlcNAc...) asparagine glycan is attached at N488. 8 consecutive transmembrane segments (helical) span residues 508–528 (PSIKWLLVCATLAVVALDGFT), 532–552 (LLSIFNLLAGLLCFVYKTCWA), 593–613 (LFFKVTAAIVCMRIAYNVVFA), 624–644 (LFTIVLIMQTASQNIPLFLVF), 664–684 (CEMFFVLSLILQNLSFFQFGG), 706–726 (IYVVGLLMCIGNMAPAIYWSL), 745–765 (LSSMFFYSVNSLLLLVACICM), and 782–804 (LLGWNILIHFLTETVLEPFLLMV).

This sequence belongs to the PIGG/PIGN/PIGO family. PIGG subfamily.

The protein resides in the endoplasmic reticulum membrane. It participates in glycolipid biosynthesis; glycosylphosphatidylinositol-anchor biosynthesis. In terms of biological role, ethanolamine phosphate transferase involved in glycosylphosphatidylinositol-anchor biosynthesis. Transfers ethanolamine phosphate to the GPI second mannose. The sequence is that of GPI ethanolamine phosphate transferase 2 (LAS21) from Eremothecium gossypii (strain ATCC 10895 / CBS 109.51 / FGSC 9923 / NRRL Y-1056) (Yeast).